A 305-amino-acid chain; its full sequence is Putative beta-lactamase HcpD (305 aa).

The signal sequence occupies residues 1-27 (MIKSWTKKWFLILFLMASCFGHLVATT). 4 TPR repeats span residues 28-61 (GEKY…RMGV), 96-133 (HLAC…KGGV), 168-205 (GISC…KDGA), and 240-277 (GSGC…GFSG). 7 disulfide bridges follow: C55/C63, C91/C99, C127/C135, C163/C171, C199/C207, C235/C243, and C271/C279.

It belongs to the hcp beta-lactamase family.

It is found in the secreted. It catalyses the reaction a beta-lactam + H2O = a substituted beta-amino acid. May hydrolyze 6-aminopenicillinic acid and 7-aminocephalosporanic acid (ACA) derivatives. Binds to penicillin. The polypeptide is Putative beta-lactamase HcpD (hcpD) (Helicobacter pylori (strain J99 / ATCC 700824) (Campylobacter pylori J99)).